A 682-amino-acid polypeptide reads, in one-letter code: Potassium-transporting ATPase ATP-binding subunit (682 aa).

4 consecutive transmembrane segments (helical) span residues 44–64 (VMAV…SGHG), 66–86 (AGFG…GNFA), 233–253 (LTFL…GVTL), and 257–277 (LLIA…LPAI). D310 functions as the 4-aspartylphosphate intermediate in the catalytic mechanism. ATP-binding positions include D347, E351, 377 to 384 (FTAQTRMS), and K395. Residues D518 and D522 each coordinate Mg(2+). 3 helical membrane passes run 588–608 (FAIL…LNVM), 616–636 (AVLA…PLAL), and 658–678 (GLGG…ALVA).

It belongs to the cation transport ATPase (P-type) (TC 3.A.3) family. Type IA subfamily. In terms of assembly, the system is composed of three essential subunits: KdpA, KdpB and KdpC.

It localises to the cell inner membrane. It carries out the reaction K(+)(out) + ATP + H2O = K(+)(in) + ADP + phosphate + H(+). Its function is as follows. Part of the high-affinity ATP-driven potassium transport (or Kdp) system, which catalyzes the hydrolysis of ATP coupled with the electrogenic transport of potassium into the cytoplasm. This subunit is responsible for energy coupling to the transport system and for the release of the potassium ions to the cytoplasm. The protein is Potassium-transporting ATPase ATP-binding subunit of Xanthomonas campestris pv. campestris (strain ATCC 33913 / DSM 3586 / NCPPB 528 / LMG 568 / P 25).